Here is a 770-residue protein sequence, read N- to C-terminus: Conserved oligomeric Golgi complex subunit 7 (770 aa).

The protein belongs to the COG7 family. In terms of assembly, component of the conserved oligomeric Golgi complex which is composed of eight different subunits and is required for normal Golgi morphology and localization.

The protein localises to the golgi apparatus membrane. Its function is as follows. Required for normal Golgi function. The chain is Conserved oligomeric Golgi complex subunit 7 (COG7) from Homo sapiens (Human).